Consider the following 664-residue polypeptide: MAGLGGSQIPDGEFTAVVYRLIRDARYAEAVQLLGGELQRSPRSRAGLSLLGYCYYRLQEFALAAECYEQLGQLHPELEQYRLYQAQALYKACLYPEATRVSLLLLDNPAYHNRVLRLQAAIKYSEADLPGARSLVEQLLSEGGEDSGGENELDGQVNLGCLLYKEGHYEAACSKFSAALQASGYRPDLSYNLALAYYSSRHYALALKHIADIIEHGIRQHPELGVGMTTVGIDVRSVGNTVVLHQTALVEAFNLRAAIEYQLRNYEAAQEALTDMPPRAEEELDPVTLHNQALMNMDARPTEGFEKLQFLLQQIPFPPETFGNLLLLYCEYEYFDLAADVLAENAHLTYEFLTPYLYDFLDAMVTCQTAPEEAFIKLDGLAGMLTEQLRKLTIQVQEARHNKDDEAVKKAVNEYEDTLEKYIPVLMAQAKIYWNLENYPMVEKLFRKSVEFCNDHHVWKLNVAHVLFMQENKYKEAIGFYEPIVKKHYDNILNVSAIVLANLCVSYIMISQNEEAEELMRKIGKEEEQLSYDDPDKKIYHLCIVNLVIGTLYCAKGNYDFGISRVIKSLEPCNKKLGTDTWYYAKRCFLSLLENMSKHTIMLRDSVIQECVQFLEHCELYGRDIPAVIEETLEEERMHIGKNTVTYESRELKALIYEIIGWNM.

TPR repeat units lie at residues 11–44 (DGEFTAVVYRLIRDARYAEAVQLLGGELQRSPRS), 45–78 (RAGLSLLGYCYYRLQEFALAAECYEQLGQLHPEL), 153–186 (LDGQVNLGCLLYKEGHYEAACSKFSAALQASGYR), 188–220 (DLSYNLALAYYSSRHYALALKHIADIIEHGIRQ), 385–418 (LTEQLRKLTIQVQEARHNKDDEAVKKAVNEYEDT), 423–456 (IPVLMAQAKIYWNLENYPMVEKLFRKSVEFCNDH), and 458–491 (VWKLNVAHVLFMQENKYKEAIGFYEPIVKKHYDN). Residues 509 to 532 (MISQNEEAEELMRKIGKEEEQLSY) adopt a coiled-coil conformation. The stretch at 543 to 576 (CIVNLVIGTLYCAKGNYDFGISRVIKSLEPCNKK) is one TPR 8 repeat.

It belongs to the TTC30/dfy-1/fleer family. As to quaternary structure, interacts with the IFT B complex components IFT27, IFT46, IFT74, IFT52, IFT57, IFT80, IFT81 and IFT88. Interacts with KIF17.

The protein resides in the cell projection. It localises to the cilium. In terms of biological role, required for polyglutamylation of axonemal tubulin. Plays a role in anterograde intraflagellar transport (IFT), the process by which cilia precursors are transported from the base of the cilium to the site of their incorporation at the tip. This chain is Intraflagellar transport protein 70B (IFT70B), found in Bos taurus (Bovine).